Here is a 115-residue protein sequence, read N- to C-terminus: Waprin-like protein (115 aa).

The N-terminal stretch at 1–21 (MNRSLLAFAIVLVLLVAGTSS) is a signal peptide. The WAP domain maps to 23 to 69 (LFNKSGNCPMRNTVTSCTPRCIGDGECSSNQKCCPNKCGTTSCANSS). 4 disulfides stabilise this stretch: Cys30/Cys56, Cys39/Cys60, Cys43/Cys55, and Cys49/Cys65.

Belongs to the venom waprin family. Cys-rich waprin subfamily. Expressed by the venom gland.

Its subcellular location is the secreted. Functionally, antimicrobial peptides with activity against Gram-positive and Gram-negative bacteria as well as fungi. Recognizes carbohydrates in the microbial cell walls, and induces structural damage to them. Also inhibits microbial serine proteases, as well as mammalian elastases. Carbohydrates that are recognized are LPS, mannan, peptidoglycan, and N-acetl-D-glucosamine. This chain is Waprin-like protein, found in Tetramorium bicarinatum (Tramp ant).